We begin with the raw amino-acid sequence, 174 residues long: MTQPLFLIGPRGCGKTTVGMALADLLNRRFVDTDQWLQSQLNMTVAEIVEREEWAGFRARETAALEAVTAPSTVIATGGGIILTEFNRHFMQNNGIVVYLCAPVSVLVNRLQAAPEEDLRPTLTGKPLSEEVQEVLEERDALYREVAHIIIDATNEPSQVISEIRSALAQTINC.

Position 12 to 17 (12 to 17) interacts with ATP; the sequence is GCGKTT. 2 residues coordinate Mg(2+): T16 and D32. Substrate contacts are provided by D34, R58, and G79. Residues 112 to 126 are LID domain; the sequence is QAAPEEDLRPTLTGK. Residue R120 coordinates ATP. Residue R139 participates in substrate binding.

The protein belongs to the shikimate kinase family. AroL subfamily. In terms of assembly, monomer. It depends on Mg(2+) as a cofactor.

Its subcellular location is the cytoplasm. It catalyses the reaction shikimate + ATP = 3-phosphoshikimate + ADP + H(+). It participates in metabolic intermediate biosynthesis; chorismate biosynthesis; chorismate from D-erythrose 4-phosphate and phosphoenolpyruvate: step 5/7. Catalyzes the specific phosphorylation of the 3-hydroxyl group of shikimic acid using ATP as a cosubstrate. The protein is Shikimate kinase 2 of Shigella dysenteriae serotype 1 (strain Sd197).